The following is a 224-amino-acid chain: Retinoschisin (224 aa).

Positions 1-23 (MPHKIEGFFLLLLFGYEATLGLS) are cleaved as a signal peptide. The F5/8 type C domain maps to 63–219 (CPYHKPLGFE…IAIRMELLEC (157 aa)). Cystine bridges form between Cys63–Cys219 and Cys110–Cys142.

As to quaternary structure, homooctamer of 4 homodimers; disulfide-linked. The homooctamer has a flat, cogwheel structure with a diameter of about 14 nm. Two stacked octamers can assemble to form a hexadecamer. Detected in the eye cup. Detected in retina, in the inner segment of the photoreceptors, the inner nuclear layer, the inner plexiform layer and the ganglion cell layer (at protein level). Restricted to the retina. At the mRNA level, detected only within the photoreceptor cell layer, most prominently within the inner segments of the photoreceptors. Undetectable in the inner plexiform layers and the inner nuclear layer.

The protein localises to the secreted. It is found in the cell membrane. Functionally, binds negatively charged membrane lipids, such as phosphatidylserine and phosphoinositides. May play a role in cell-cell adhesion processes in the retina, via homomeric interaction between octamers present on the surface of two neighboring cells. Required for normal structure and function of the retina. The polypeptide is Retinoschisin (Rs1) (Mus musculus (Mouse)).